A 451-amino-acid polypeptide reads, in one-letter code: Glyceraldehyde-3-phosphate dehydrogenase B, chloroplastic (451 aa).

The N-terminal 83 residues, 1-83 (MASHAALAPS…AAPVRGETVA (83 aa)), are a transit peptide targeting the chloroplast. NADP(+) contacts are provided by residues 94–95 (RI), Asp-118, and Arg-163. Residues 237-239 (SCT), Thr-268, Arg-283, 296-297 (TG), and Arg-319 each bind D-glyceraldehyde 3-phosphate. Cys-238 functions as the Nucleophile in the catalytic mechanism. Asn-402 serves as a coordination point for NADP(+).

The protein belongs to the glyceraldehyde-3-phosphate dehydrogenase family. As to quaternary structure, tetramer of either four A chains (GAPDH 2) or two A and two B chains (GAPDH 1).

The protein localises to the plastid. Its subcellular location is the chloroplast. The catalysed reaction is D-glyceraldehyde 3-phosphate + phosphate + NADP(+) = (2R)-3-phospho-glyceroyl phosphate + NADPH + H(+). Its pathway is carbohydrate biosynthesis; Calvin cycle. This is Glyceraldehyde-3-phosphate dehydrogenase B, chloroplastic (GAPB) from Spinacia oleracea (Spinach).